A 398-amino-acid polypeptide reads, in one-letter code: S-adenosylmethionine synthase (398 aa).

Residue histidine 17 participates in ATP binding. Aspartate 19 lines the Mg(2+) pocket. Glutamate 45 serves as a coordination point for K(+). L-methionine contacts are provided by glutamate 58 and glutamine 101. The tract at residues 101-111 is flexible loop; the sequence is QSPDIAQGVDK. ATP contacts are provided by residues 176-178, 243-244, aspartate 252, 258-259, and lysine 279; these read DGK, RF, and RK. Residue aspartate 252 coordinates L-methionine. L-methionine is bound at residue lysine 283.

Belongs to the AdoMet synthase family. As to quaternary structure, homotetramer; dimer of dimers. Mg(2+) serves as cofactor. Requires K(+) as cofactor.

Its subcellular location is the cytoplasm. It catalyses the reaction L-methionine + ATP + H2O = S-adenosyl-L-methionine + phosphate + diphosphate. The protein operates within amino-acid biosynthesis; S-adenosyl-L-methionine biosynthesis; S-adenosyl-L-methionine from L-methionine: step 1/1. In terms of biological role, catalyzes the formation of S-adenosylmethionine (AdoMet) from methionine and ATP. The overall synthetic reaction is composed of two sequential steps, AdoMet formation and the subsequent tripolyphosphate hydrolysis which occurs prior to release of AdoMet from the enzyme. This Staphylococcus haemolyticus (strain JCSC1435) protein is S-adenosylmethionine synthase.